The chain runs to 615 residues: Leucine aminopeptidase 2 (615 aa).

Residues 139–141 and 271–276 contribute to the a peptide site; these read QCQ and PYGGME. His300 contributes to the Zn(2+) binding site. Glu301 acts as the Proton acceptor in catalysis. Zn(2+) contacts are provided by His304 and Glu323. Residue Tyr386 is the Proton donor of the active site.

The protein belongs to the peptidase M1 family. Zn(2+) serves as cofactor.

It is found in the cytoplasm. Its subcellular location is the nucleus. It catalyses the reaction an epoxide + H2O = an ethanediol. Its function is as follows. Aminopeptidase that preferentially cleaves di- and tripeptides. Also has low epoxide hydrolase activity (in vitro). Can hydrolyze the epoxide leukotriene LTA(4) but it forms preferentially 5,6-dihydroxy-7,9,11,14-eicosatetraenoic acid rather than the cytokine leukotriene B(4) as the product compared to the homologous mammalian enzyme (in vitro). This Aspergillus oryzae (strain ATCC 42149 / RIB 40) (Yellow koji mold) protein is Leucine aminopeptidase 2.